A 471-amino-acid chain; its full sequence is Heat shock 70 kDa protein 13 (471 aa).

The first 22 residues, 1–22, serve as a signal peptide directing secretion; sequence MAREMTILGSAVLTLLLAGYLA. Residues 314–352 are disordered; sequence EEQDRKEPHSSDTELPKDKLSSADDHRVNSGFGRGLSDK. The span at 315–341 shows a compositional bias: basic and acidic residues; the sequence is EQDRKEPHSSDTELPKDKLSSADDHRV.

Belongs to the heat shock protein 70 family. Binds UBQLN2.

The protein localises to the microsome. It localises to the endoplasmic reticulum. Has peptide-independent ATPase activity. This is Heat shock 70 kDa protein 13 (HSPA13) from Pongo abelii (Sumatran orangutan).